Consider the following 233-residue polypeptide: MAKAGKRIEKAREGIDRKKTYGLDEAVKMVKDRASVKFDETIEVAIALGVDPRHADQMVRGVVALPSGSGRTVRVAVFAKGDKADQARAAGADIVGDDDLAEIVQSGKIDFDRCIATPDMMPLVGRLGKVLGPRGLMPNPKVGTVTPDVAEAVKAAKGGAVEFRVEKAGIIHAGVGKASFSEDQILVNIRALIDAVQKAKPTGAKGTYIKRIAISSTMGPGVKVEPQSVAASA.

Belongs to the universal ribosomal protein uL1 family. Part of the 50S ribosomal subunit.

In terms of biological role, binds directly to 23S rRNA. The L1 stalk is quite mobile in the ribosome, and is involved in E site tRNA release. Functionally, protein L1 is also a translational repressor protein, it controls the translation of the L11 operon by binding to its mRNA. This is Large ribosomal subunit protein uL1 from Parvibaculum lavamentivorans (strain DS-1 / DSM 13023 / NCIMB 13966).